The primary structure comprises 104 residues: Integration host factor subunit beta (104 aa).

A compositionally biased stretch (basic and acidic residues) spans Gly-83–Gly-95. The tract at residues Gly-83–Ala-104 is disordered.

The protein belongs to the bacterial histone-like protein family. As to quaternary structure, heterodimer of an alpha and a beta chain.

This protein is one of the two subunits of integration host factor, a specific DNA-binding protein that functions in genetic recombination as well as in transcriptional and translational control. The chain is Integration host factor subunit beta from Rhodopseudomonas palustris (strain ATCC BAA-98 / CGA009).